Consider the following 265-residue polypeptide: Probable esterase tazC (265 aa).

Active-site charge relay system residues include S119, D209, and H236.

Belongs to the LovG family.

The protein operates within secondary metabolite biosynthesis. Functionally, probable esterase; part of the gene cluster that mediates the biosynthesis of azaterrilone A and other azaphilones, a class of fungal metabolites characterized by a highly oxygenated pyrano-quinone bicyclic core and exhibiting a broad range of bioactivities. The first step of the pathway begins with the non-reducing polyketide synthase tazA that assembles one acetyl-CoA starter unit, five malonyl-CoA units, and catalyzes a series of Claisen condensations, methylation, PT-mediated cyclization, and finally releases the first hexaketide precursor through the R-domain. The tazA product then undergoes reduction on its terminal ketone and the following pyran-ring formation by yet undetermined enzyme(s). Dehydration and enoyl reduction, possibly involving the trans-enoyl reductase tazE leads to the next intermediate. TazD is predicted as an acetyltransferase and might catalyze the acetylation steps leading to the synthesis of azaterrilone A. Azaterrilone A is not the final product of the taz pathway and both the highly reducing polyketide synthase tazB and the dual enzyme tazHJ catalyze late steps of the pathway, leading to the production of the 2 final stereoisomers that contain additional polyketide modification whose structures have still to be determined. This is Probable esterase tazC from Aspergillus terreus (strain NIH 2624 / FGSC A1156).